Consider the following 476-residue polypeptide: Lactate utilization protein B (476 aa).

4Fe-4S ferredoxin-type domains lie at 304-334 and 353-382; these read GTEF…GHSY and YDDY…LHEL. The [4Fe-4S] cluster site is built by Cys313, Cys316, Cys319, Cys323, Cys366, Cys369, and Cys373.

It belongs to the LutB/YkgF family.

Is involved in L-lactate degradation and allows cells to grow with lactate as the sole carbon source. Has probably a role as an electron transporter during oxidation of L-lactate. This is Lactate utilization protein B from Geobacillus thermodenitrificans (strain NG80-2).